We begin with the raw amino-acid sequence, 308 residues long: Tyrosine recombinase XerD (308 aa).

A Core-binding (CB) domain is found at 3 to 89; that stretch reads NGFTRLTEQF…SIHEFHRFAL (87 aa). Residues 110-301 enclose the Tyr recombinase domain; the sequence is TLPDVLTVDE…SPETLIETYL (192 aa). Residues Arg153, Lys177, His253, Arg256, and His279 contribute to the active site. Tyr288 functions as the O-(3'-phospho-DNA)-tyrosine intermediate in the catalytic mechanism.

Belongs to the 'phage' integrase family. XerD subfamily. As to quaternary structure, forms a cyclic heterotetrameric complex composed of two molecules of XerC and two molecules of XerD.

The protein resides in the cytoplasm. Its function is as follows. Site-specific tyrosine recombinase, which acts by catalyzing the cutting and rejoining of the recombining DNA molecules. The XerC-XerD complex is essential to convert dimers of the bacterial chromosome into monomers to permit their segregation at cell division. It also contributes to the segregational stability of plasmids. The sequence is that of Tyrosine recombinase XerD from Bifidobacterium longum (strain NCC 2705).